Reading from the N-terminus, the 155-residue chain is UPF0178 protein Clos_2709 (155 aa).

The protein belongs to the UPF0178 family.

In Alkaliphilus oremlandii (strain OhILAs) (Clostridium oremlandii (strain OhILAs)), this protein is UPF0178 protein Clos_2709.